Here is a 100-residue protein sequence, read N- to C-terminus: NADH-quinone oxidoreductase subunit K 2 (100 aa).

3 helical membrane passes run 4 to 24, 29 to 49, and 60 to 80; these read LNNY…GVLV, IVIF…FIAF, and IFVF…LALM.

This sequence belongs to the complex I subunit 4L family. NDH-1 is composed of 14 different subunits. Subunits NuoA, H, J, K, L, M, N constitute the membrane sector of the complex.

The protein localises to the cell inner membrane. It carries out the reaction a quinone + NADH + 5 H(+)(in) = a quinol + NAD(+) + 4 H(+)(out). NDH-1 shuttles electrons from NADH, via FMN and iron-sulfur (Fe-S) centers, to quinones in the respiratory chain. The immediate electron acceptor for the enzyme in this species is believed to be ubiquinone. Couples the redox reaction to proton translocation (for every two electrons transferred, four hydrogen ions are translocated across the cytoplasmic membrane), and thus conserves the redox energy in a proton gradient. This Geotalea uraniireducens (strain Rf4) (Geobacter uraniireducens) protein is NADH-quinone oxidoreductase subunit K 2.